Consider the following 322-residue polypeptide: DNA repair and recombination protein RadA (322 aa).

105 to 112 (GMFGSGKT) is an ATP binding site.

This sequence belongs to the eukaryotic RecA-like protein family.

In terms of biological role, involved in DNA repair and in homologous recombination. Binds and assemble on single-stranded DNA to form a nucleoprotein filament. Hydrolyzes ATP in a ssDNA-dependent manner and promotes DNA strand exchange between homologous DNA molecules. This chain is DNA repair and recombination protein RadA, found in Methanococcus maripaludis (strain DSM 14266 / JCM 13030 / NBRC 101832 / S2 / LL).